Consider the following 430-residue polypeptide: Serine--tRNA ligase (430 aa).

235-237 (TAE) serves as a coordination point for L-serine. ATP-binding positions include 266-268 (RRE) and V282. E289 serves as a coordination point for L-serine. 353–356 (EASS) contributes to the ATP binding site. S389 lines the L-serine pocket.

The protein belongs to the class-II aminoacyl-tRNA synthetase family. Type-1 seryl-tRNA synthetase subfamily. Homodimer. The tRNA molecule binds across the dimer.

The protein resides in the cytoplasm. It carries out the reaction tRNA(Ser) + L-serine + ATP = L-seryl-tRNA(Ser) + AMP + diphosphate + H(+). The catalysed reaction is tRNA(Sec) + L-serine + ATP = L-seryl-tRNA(Sec) + AMP + diphosphate + H(+). Its pathway is aminoacyl-tRNA biosynthesis; selenocysteinyl-tRNA(Sec) biosynthesis; L-seryl-tRNA(Sec) from L-serine and tRNA(Sec): step 1/1. Its function is as follows. Catalyzes the attachment of serine to tRNA(Ser). Is also able to aminoacylate tRNA(Sec) with serine, to form the misacylated tRNA L-seryl-tRNA(Sec), which will be further converted into selenocysteinyl-tRNA(Sec). The sequence is that of Serine--tRNA ligase from Chlorobium luteolum (strain DSM 273 / BCRC 81028 / 2530) (Pelodictyon luteolum).